Consider the following 65-residue polypeptide: Large ribosomal subunit protein bL35 (65 aa).

The interval 1-26 is disordered; sequence MPKMKTHRGAAKRFRKTGTGKLKRGK.

Belongs to the bacterial ribosomal protein bL35 family.

This is Large ribosomal subunit protein bL35 from Clostridium beijerinckii (strain ATCC 51743 / NCIMB 8052) (Clostridium acetobutylicum).